Reading from the N-terminus, the 266-residue chain is Putative carbamate hydrolase RutD (266 aa).

The AB hydrolase-1 domain maps to 14–119 (PVVVLSAGLG…LVNGWLSLSP (106 aa)).

This sequence belongs to the AB hydrolase superfamily. Hydrolase RutD family.

It carries out the reaction carbamate + 2 H(+) = NH4(+) + CO2. In terms of biological role, involved in pyrimidine catabolism. May facilitate the hydrolysis of carbamate, a reaction that can also occur spontaneously. The sequence is that of Putative carbamate hydrolase RutD from Klebsiella pneumoniae subsp. pneumoniae (strain ATCC 700721 / MGH 78578).